The sequence spans 296 residues: Putative methyltransferase HI_1523 (296 aa).

The protein belongs to the N(4)/N(6)-methyltransferase family.

This chain is Putative methyltransferase HI_1523, found in Haemophilus influenzae (strain ATCC 51907 / DSM 11121 / KW20 / Rd).